The sequence spans 193 residues: dTTP/UTP pyrophosphatase (193 aa).

The Proton acceptor role is filled by aspartate 75.

This sequence belongs to the Maf family. YhdE subfamily. A divalent metal cation is required as a cofactor.

It localises to the cytoplasm. It catalyses the reaction dTTP + H2O = dTMP + diphosphate + H(+). The enzyme catalyses UTP + H2O = UMP + diphosphate + H(+). Its function is as follows. Nucleoside triphosphate pyrophosphatase that hydrolyzes dTTP and UTP. May have a dual role in cell division arrest and in preventing the incorporation of modified nucleotides into cellular nucleic acids. This is dTTP/UTP pyrophosphatase from Chlorobium luteolum (strain DSM 273 / BCRC 81028 / 2530) (Pelodictyon luteolum).